Reading from the N-terminus, the 424-residue chain is Probable ribonuclease FAU-1 (424 aa).

Belongs to the FAU-1 family.

Functionally, probable RNase involved in rRNA stability through maturation and/or degradation of precursor rRNAs. Binds to RNA in loop regions with AU-rich sequences. This is Probable ribonuclease FAU-1 from Saccharolobus islandicus (strain Y.G.57.14 / Yellowstone #1) (Sulfolobus islandicus).